The sequence spans 456 residues: tRNA modification GTPase MnmE (456 aa).

(6S)-5-formyl-5,6,7,8-tetrahydrofolate contacts are provided by arginine 23, glutamate 85, and arginine 124. In terms of domain architecture, TrmE-type G spans 220–376; sequence GVAVLIAGKP…LKESIFQTFI (157 aa). Position 230 (asparagine 230) interacts with K(+). GTP-binding positions include 230–235, 249–255, and 274–277; these read NVGKSS, TSVPGTT, and DTAG. Serine 234 is a binding site for Mg(2+). 3 residues coordinate K(+): threonine 249, valine 251, and threonine 254. Threonine 255 is a binding site for Mg(2+). (6S)-5-formyl-5,6,7,8-tetrahydrofolate is bound at residue lysine 456.

It belongs to the TRAFAC class TrmE-Era-EngA-EngB-Septin-like GTPase superfamily. TrmE GTPase family. In terms of assembly, homodimer. Heterotetramer of two MnmE and two MnmG subunits. Requires K(+) as cofactor.

The protein resides in the cytoplasm. Functionally, exhibits a very high intrinsic GTPase hydrolysis rate. Involved in the addition of a carboxymethylaminomethyl (cmnm) group at the wobble position (U34) of certain tRNAs, forming tRNA-cmnm(5)s(2)U34. The sequence is that of tRNA modification GTPase MnmE from Geobacter sulfurreducens (strain ATCC 51573 / DSM 12127 / PCA).